Reading from the N-terminus, the 167-residue chain is Early nodulin-like protein 16 (167 aa).

The N-terminal stretch at 1-24 (MARVAVLVAGAVLAFLLAATNVTA) is a signal peptide. One can recognise a Phytocyanin domain in the interval 25 to 126 (KRWTVGDNKF…GMKLAVLVEK (102 aa)). Asparagine 40, asparagine 71, asparagine 86, and asparagine 99 each carry an N-linked (GlcNAc...) asparagine glycan. Cysteine 78 and cysteine 114 are oxidised to a cystine. Asparagine 138 carries the GPI-anchor amidated asparagine lipid modification. A propeptide spans 139 to 167 (SARRTFSVSGFAYQFLIPVAVFAAVGTRY) (removed in mature form).

Belongs to the early nodulin-like (ENODL) family.

It is found in the cell membrane. Its function is as follows. May act as a carbohydrate transporter. This is Early nodulin-like protein 16 from Arabidopsis thaliana (Mouse-ear cress).